We begin with the raw amino-acid sequence, 413 residues long: Alpha-1-antitrypsin-like protein CM55-ST (413 aa).

The signal sequence occupies residues M1–A24. Position 25 is a pyrrolidone carboxylic acid (Q25). N-linked (GlcNAc...) asparagine glycans are attached at residues N65, N102, N165, and N266. The tract at residues G368–R387 is RCL.

It belongs to the serpin family. As to expression, expressed in liver.

The polypeptide is Alpha-1-antitrypsin-like protein CM55-ST (Tamias sibiricus (Siberian chipmunk)).